Consider the following 653-residue polypeptide: Zinc finger protein 59 (653 aa).

In terms of domain architecture, KRAB spans 14–86; the sequence is VTFRDVAVDF…VNEETGRPSP (73 aa). 16 C2H2-type zinc fingers span residues 172 to 194, 200 to 222, 256 to 278, 284 to 306, 312 to 334, 340 to 362, 368 to 390, 396 to 418, 424 to 446, 452 to 474, 480 to 502, 508 to 530, 536 to 558, 564 to 586, 592 to 614, and 620 to 642; these read YECK…QSVH, YECK…QKCH, FACR…GLIH, YECN…QKIH, FQCK…QSSH, FECE…QRIH, FECN…QKTH, LECN…LKTH, FKCK…LTVH, YQCK…ESIH, FQCE…QKSH, FECK…KIVH, FECK…GAVH, YECS…RKIH, FKCQ…QSIH, and FECE…LRIH.

This sequence belongs to the krueppel C2H2-type zinc-finger protein family. Expressed predominantly in the testis (at protein level).

The protein localises to the nucleus. May have a role during differentiation processes. The sequence is that of Zinc finger protein 59 (Zfp59) from Mus musculus (Mouse).